The sequence spans 310 residues: MSLEPKIPLPNSLQKPLSRFYEYLRSEKGLSLHTQRNYKQQLETMAAHLVTLGLKDWSQVDAAWVRQLASKGMREGMKASSIATRLSSLRSFFDFLVLRGEMTANPAKGVSAPRKQRPLPKNLDVDEVGQLLDVNEDDPLSIRDRAMMEVMYGAGLRLAELVGINLKDVLGRQGEIRVIGKGDKERKAPFSGLAKEWVDKWLKVRGALASPGETALFVSKLGTRISHRSVQKRMEEWGKKQSVASHISPHKLRHSFATHVLESSQNLRAVQELLGHENISTTQVYTHLDFQHLAQAYDQAHPRARKKNKD.

Residues 11–97 (NSLQKPLSRF…SLRSFFDFLV (87 aa)) enclose the Core-binding (CB) domain. The region spanning 118–298 (PLPKNLDVDE…DFQHLAQAYD (181 aa)) is the Tyr recombinase domain. Residues Arg-157, Lys-181, His-250, Arg-253, and His-276 contribute to the active site. The active-site O-(3'-phospho-DNA)-tyrosine intermediate is Tyr-285.

This sequence belongs to the 'phage' integrase family. XerC subfamily. Forms a cyclic heterotetrameric complex composed of two molecules of XerC and two molecules of XerD.

It localises to the cytoplasm. Functionally, site-specific tyrosine recombinase, which acts by catalyzing the cutting and rejoining of the recombining DNA molecules. The XerC-XerD complex is essential to convert dimers of the bacterial chromosome into monomers to permit their segregation at cell division. It also contributes to the segregational stability of plasmids. The polypeptide is Tyrosine recombinase XerC (Vibrio atlanticus (strain LGP32) (Vibrio splendidus (strain Mel32))).